A 244-amino-acid polypeptide reads, in one-letter code: 6-carboxyhexanoate--CoA ligase (244 aa).

It belongs to the BioW family. In terms of assembly, homodimer. Mg(2+) serves as cofactor.

It catalyses the reaction heptanedioate + ATP + CoA = 6-carboxyhexanoyl-CoA + AMP + diphosphate. Its pathway is metabolic intermediate metabolism; pimeloyl-CoA biosynthesis; pimeloyl-CoA from pimelate: step 1/1. Its function is as follows. Catalyzes the transformation of pimelate into pimeloyl-CoA with concomitant hydrolysis of ATP to AMP. The sequence is that of 6-carboxyhexanoate--CoA ligase from Methanococcus maripaludis (strain C7 / ATCC BAA-1331).